The sequence spans 265 residues: Undecaprenyl-diphosphatase 1 (265 aa).

A run of 7 helical transmembrane segments spans residues 4 to 24 (IIIA…PISS), 42 to 62 (AKTF…ILYH), 84 to 104 (FHVF…HDVI), 108 to 128 (LFQP…MIFA), 184 to 204 (SEFS…LDLL), 217 to 237 (MFAV…VTFL), and 245 to 265 (LKPF…FVLL).

It belongs to the UppP family.

Its subcellular location is the cell membrane. It carries out the reaction di-trans,octa-cis-undecaprenyl diphosphate + H2O = di-trans,octa-cis-undecaprenyl phosphate + phosphate + H(+). Catalyzes the dephosphorylation of undecaprenyl diphosphate (UPP). Confers resistance to bacitracin. This chain is Undecaprenyl-diphosphatase 1, found in Bacillus thuringiensis (strain Al Hakam).